The following is a 347-amino-acid chain: Heat-inducible transcription repressor HrcA (347 aa).

This sequence belongs to the HrcA family.

Its function is as follows. Negative regulator of class I heat shock genes (grpE-dnaK-dnaJ and groELS operons). Prevents heat-shock induction of these operons. This Lactococcus lactis subsp. lactis (strain IL1403) (Streptococcus lactis) protein is Heat-inducible transcription repressor HrcA.